The primary structure comprises 339 residues: ADP-L-glycero-D-manno-heptose-6-epimerase (339 aa).

NADP(+)-binding positions include 11-12 (FI), 32-33 (DD), lysine 39, lysine 54, 75-79 (EGACS), and asparagine 92. The Proton acceptor role is filled by tyrosine 139. Lysine 143 is a binding site for NADP(+). Asparagine 170 lines the substrate pocket. Positions 171 and 179 each coordinate NADP(+). The active-site Proton acceptor is lysine 179. Residues arginine 181, histidine 188, 202–205 (FGEY), arginine 215, and tyrosine 294 contribute to the substrate site.

Belongs to the NAD(P)-dependent epimerase/dehydratase family. HldD subfamily. As to quaternary structure, homopentamer. NADP(+) serves as cofactor.

It catalyses the reaction ADP-D-glycero-beta-D-manno-heptose = ADP-L-glycero-beta-D-manno-heptose. It functions in the pathway nucleotide-sugar biosynthesis; ADP-L-glycero-beta-D-manno-heptose biosynthesis; ADP-L-glycero-beta-D-manno-heptose from D-glycero-beta-D-manno-heptose 7-phosphate: step 4/4. Its function is as follows. Catalyzes the interconversion between ADP-D-glycero-beta-D-manno-heptose and ADP-L-glycero-beta-D-manno-heptose via an epimerization at carbon 6 of the heptose. The polypeptide is ADP-L-glycero-D-manno-heptose-6-epimerase (Polynucleobacter necessarius subsp. necessarius (strain STIR1)).